The sequence spans 346 residues: Lysyl aminopeptidase (346 aa).

Positions 63 and 177 each coordinate Zn(2+). Catalysis depends on Glu207, which acts as the Proton acceptor. Positions 208, 230, and 314 each coordinate Zn(2+).

In terms of assembly, homotetramer. Requires Zn(2+) as cofactor.

The enzyme catalyses Preferentially, release of N-terminal lysine.. In terms of biological role, hydrolyzes di-, tri- and tetrapeptides with a lysine as the N-terminal amino acid and with Gly, Lys, Ala, Phe or Glu in the second position. This Pyrococcus furiosus (strain ATCC 43587 / DSM 3638 / JCM 8422 / Vc1) protein is Lysyl aminopeptidase.